The following is a 436-amino-acid chain: MTLNTDNNQILFERAKRVIPGGVNSPVRAFKAVGGTPRFVKRAQGAYFWDANNQRYTDFIGSWGPMILGHGHPAVVEAVQAAVLEGFSYGAPTEREVELAEEILRLVPSMDMVRLVSSGTEAAMSTIRLARGATGRSKLIKFEGCYHGHADALLVKAGSGLATFGNPTSAGVPPEVVQHTVVLEYNNIEQLEEAFAMQGSEIACLMMEPICGNMNFVRASVPFVKRCRELCTQYGALLVFDEVMTGFRVALGGAQSVYAKEIPGFEPDMTVMGKVIGGGMPLAAFGAKRAVMEHLAPLGTVYQAGTLSGNPVATACGLATLREISKPGFYESLARTTRSLTDGLKAAATAEGLAFSADSEGGMFGFFLLDTLPQNYVQVMKSDSARFNQLFHGLLDRGVYIAPALYEAGFVSAAHTAEDIAATVAAARAVFKIISK.

At Lys274 the chain carries N6-(pyridoxal phosphate)lysine.

The protein belongs to the class-III pyridoxal-phosphate-dependent aminotransferase family. HemL subfamily. Homodimer. It depends on pyridoxal 5'-phosphate as a cofactor.

Its subcellular location is the cytoplasm. It catalyses the reaction (S)-4-amino-5-oxopentanoate = 5-aminolevulinate. Its pathway is porphyrin-containing compound metabolism; protoporphyrin-IX biosynthesis; 5-aminolevulinate from L-glutamyl-tRNA(Glu): step 2/2. This Albidiferax ferrireducens (strain ATCC BAA-621 / DSM 15236 / T118) (Rhodoferax ferrireducens) protein is Glutamate-1-semialdehyde 2,1-aminomutase.